A 164-amino-acid polypeptide reads, in one-letter code: Putative lung carcinoma-associated protein 10 (164 aa).

Residues 1–164 (MSSCPVHDCP…TQKPQTTVGQ (164 aa)) form a disordered region. Over residues 23-40 (GSRGALRLRGGAPGSAAG) the composition is skewed to low complexity. Polar residues predominate over residues 152–164 (MQKTQKPQTTVGQ).

This is Putative lung carcinoma-associated protein 10 (LCA10) from Homo sapiens (Human).